A 355-amino-acid chain; its full sequence is Protein DVR-1 (355 aa).

A signal peptide spans 1–15 (MFLVLLRACLLTLSL). Residues 16–240 (CSPAEDDGLV…PLQCRSRRKR (225 aa)) constitute a propeptide that is removed on maturation. N108, N179, and N296 each carry an N-linked (GlcNAc...) asparagine glycan. Cystine bridges form between C254/C320, C283/C352, and C287/C354.

The protein belongs to the TGF-beta family. As to quaternary structure, homodimer. In terms of tissue distribution, abundant in ovaries and eggs, and equally distributed among all blastomeres.

It localises to the secreted. Its function is as follows. Serves to facilitate the differentiation of either mesoderm or endoderm either as a cofactor in an instructive signal or by providing permissive environment. The chain is Protein DVR-1 (dvr1) from Danio rerio (Zebrafish).